Here is a 159-residue protein sequence, read N- to C-terminus: 3-hydroxyacyl-[acyl-carrier-protein] dehydratase FabZ (159 aa).

Residue H59 is part of the active site.

It belongs to the thioester dehydratase family. FabZ subfamily.

The protein resides in the cytoplasm. It carries out the reaction a (3R)-hydroxyacyl-[ACP] = a (2E)-enoyl-[ACP] + H2O. In terms of biological role, involved in unsaturated fatty acids biosynthesis. Catalyzes the dehydration of short chain beta-hydroxyacyl-ACPs and long chain saturated and unsaturated beta-hydroxyacyl-ACPs. The polypeptide is 3-hydroxyacyl-[acyl-carrier-protein] dehydratase FabZ (Caulobacter vibrioides (strain ATCC 19089 / CIP 103742 / CB 15) (Caulobacter crescentus)).